The following is a 217-amino-acid chain: Large ribosomal subunit protein uL1 (217 aa).

Belongs to the universal ribosomal protein uL1 family. As to quaternary structure, part of the 50S ribosomal subunit.

In terms of biological role, binds directly to 23S rRNA. Probably involved in E site tRNA release. Functionally, protein L1 is also a translational repressor protein, it controls the translation of its operon by binding to its mRNA. The protein is Large ribosomal subunit protein uL1 of Aeropyrum pernix (strain ATCC 700893 / DSM 11879 / JCM 9820 / NBRC 100138 / K1).